We begin with the raw amino-acid sequence, 260 residues long: Peptidase inhibitor 15-A (260 aa).

The first 21 residues, 1–21, serve as a signal peptide directing secretion; it reads MNENRLAIDILLLCISCGASA. A propeptide spanning residues 22–62 is cleaved from the precursor; sequence LAGFSPTASSSLPATNLTDIGFAPPKYLTEAANIPKTRRKR. Asn-37 and Asn-126 each carry an N-linked (GlcNAc...) asparagine glycan. The SCP domain occupies 73–213; that stretch reads LDYHNKVRGK…KRATYLVCNY (141 aa).

Belongs to the CRISP family.

Its subcellular location is the secreted. Functionally, serine protease inhibitor which displays weak inhibitory activity against trypsin. May play a role in facial patterning during embryonic development. In Danio rerio (Zebrafish), this protein is Peptidase inhibitor 15-A (pi15a).